A 208-amino-acid chain; its full sequence is ATP-dependent Clp protease proteolytic subunit (208 aa).

S105 acts as the Nucleophile in catalysis. H130 is an active-site residue.

The protein belongs to the peptidase S14 family. Fourteen ClpP subunits assemble into 2 heptameric rings which stack back to back to give a disk-like structure with a central cavity, resembling the structure of eukaryotic proteasomes.

The protein localises to the cytoplasm. The enzyme catalyses Hydrolysis of proteins to small peptides in the presence of ATP and magnesium. alpha-casein is the usual test substrate. In the absence of ATP, only oligopeptides shorter than five residues are hydrolyzed (such as succinyl-Leu-Tyr-|-NHMec, and Leu-Tyr-Leu-|-Tyr-Trp, in which cleavage of the -Tyr-|-Leu- and -Tyr-|-Trp bonds also occurs).. Its function is as follows. Cleaves peptides in various proteins in a process that requires ATP hydrolysis. Has a chymotrypsin-like activity. Plays a major role in the degradation of misfolded proteins. This is ATP-dependent Clp protease proteolytic subunit from Xylella fastidiosa (strain M12).